The chain runs to 204 residues: ATP phosphoribosyltransferase (204 aa).

This sequence belongs to the ATP phosphoribosyltransferase family. Short subfamily. Heteromultimer composed of HisG and HisZ subunits.

The protein resides in the cytoplasm. It catalyses the reaction 1-(5-phospho-beta-D-ribosyl)-ATP + diphosphate = 5-phospho-alpha-D-ribose 1-diphosphate + ATP. It participates in amino-acid biosynthesis; L-histidine biosynthesis; L-histidine from 5-phospho-alpha-D-ribose 1-diphosphate: step 1/9. In terms of biological role, catalyzes the condensation of ATP and 5-phosphoribose 1-diphosphate to form N'-(5'-phosphoribosyl)-ATP (PR-ATP). Has a crucial role in the pathway because the rate of histidine biosynthesis seems to be controlled primarily by regulation of HisG enzymatic activity. The sequence is that of ATP phosphoribosyltransferase from Staphylococcus aureus (strain bovine RF122 / ET3-1).